The primary structure comprises 95 residues: MRTLALLAAILLVALQAQAEHISVSIDEVVDQQPPQAEDQDVAIYVKEHESSALEALGVKAGVVCACRRALCLPLERRAGFCRIRGRIHPLCCRR.

The first 19 residues, 1-19 (MRTLALLAAILLVALQAQA), serve as a signal peptide directing secretion. Positions 20–62 (EHISVSIDEVVDQQPPQAEDQDVAIYVKEHESSALEALGVKAG) are excised as a propeptide. 3 cysteine pairs are disulfide-bonded: Cys-65/Cys-93, Cys-67/Cys-82, and Cys-72/Cys-92.

It belongs to the alpha-defensin family.

Its subcellular location is the secreted. Functionally, host-defense peptide that has antimicrobial activity. Inhibits corticotropin (ACTH)-stimulated corticosterone production (in vitro). The chain is Defensin alpha 4 from Oryctolagus cuniculus (Rabbit).